The following is a 382-amino-acid chain: 3-dehydroquinate synthase (382 aa).

Residues 115 to 119, 139 to 140, K152, and K161 each bind NAD(+); these read GVVGD and TS. 3 residues coordinate Zn(2+): E194, H256, and H274.

This sequence belongs to the sugar phosphate cyclases superfamily. Dehydroquinate synthase family. Co(2+) is required as a cofactor. The cofactor is Zn(2+). Requires NAD(+) as cofactor.

It localises to the cytoplasm. The catalysed reaction is 7-phospho-2-dehydro-3-deoxy-D-arabino-heptonate = 3-dehydroquinate + phosphate. It functions in the pathway metabolic intermediate biosynthesis; chorismate biosynthesis; chorismate from D-erythrose 4-phosphate and phosphoenolpyruvate: step 2/7. Catalyzes the conversion of 3-deoxy-D-arabino-heptulosonate 7-phosphate (DAHP) to dehydroquinate (DHQ). This Rhodopseudomonas palustris (strain BisB18) protein is 3-dehydroquinate synthase.